We begin with the raw amino-acid sequence, 285 residues long: MAQSRLFFSADKAEAERTYNILEQAFEDDGFPIAITEIDEDRQIFEVSVYVEDDAEEVAARVDALVGPGLFDTEELPDIDWVTHSLEGLKPVRAGHFFVHGSHDRDKIEPGDIAIEIDAGLAFGTGHHGTTAGCLELIEETVQTEHPTNALDLGTGSAVLAIAIARLAPIPILATDIDPIAVTVAAENAAKNGVAEHIVTATAEGFGHPIFRSYSPFDLIVANILANPLIELAPSIKEHLAPGGSIILSGILDSQHDAVLAAYQTQGLTHQKTLHREGWVAIHLK.

S-adenosyl-L-methionine contacts are provided by threonine 131, glycine 154, aspartate 176, and asparagine 223.

It belongs to the methyltransferase superfamily. PrmA family.

Its subcellular location is the cytoplasm. It carries out the reaction L-lysyl-[protein] + 3 S-adenosyl-L-methionine = N(6),N(6),N(6)-trimethyl-L-lysyl-[protein] + 3 S-adenosyl-L-homocysteine + 3 H(+). Its function is as follows. Methylates ribosomal protein L11. This Brucella suis (strain ATCC 23445 / NCTC 10510) protein is Ribosomal protein L11 methyltransferase.